The chain runs to 138 residues: ATP synthase epsilon chain (138 aa).

Belongs to the ATPase epsilon chain family. In terms of assembly, F-type ATPases have 2 components, CF(1) - the catalytic core - and CF(0) - the membrane proton channel. CF(1) has five subunits: alpha(3), beta(3), gamma(1), delta(1), epsilon(1). CF(0) has three main subunits: a, b and c.

Its subcellular location is the cell inner membrane. Functionally, produces ATP from ADP in the presence of a proton gradient across the membrane. This chain is ATP synthase epsilon chain, found in Blochmanniella floridana.